A 196-amino-acid polypeptide reads, in one-letter code: ATP-dependent Clp protease proteolytic subunit (196 aa).

Serine 98 serves as the catalytic Nucleophile. Histidine 123 is an active-site residue.

This sequence belongs to the peptidase S14 family. In terms of assembly, fourteen ClpP subunits assemble into 2 heptameric rings which stack back to back to give a disk-like structure with a central cavity, resembling the structure of eukaryotic proteasomes.

The protein localises to the cytoplasm. It catalyses the reaction Hydrolysis of proteins to small peptides in the presence of ATP and magnesium. alpha-casein is the usual test substrate. In the absence of ATP, only oligopeptides shorter than five residues are hydrolyzed (such as succinyl-Leu-Tyr-|-NHMec, and Leu-Tyr-Leu-|-Tyr-Trp, in which cleavage of the -Tyr-|-Leu- and -Tyr-|-Trp bonds also occurs).. Cleaves peptides in various proteins in a process that requires ATP hydrolysis. Has a chymotrypsin-like activity. Plays a major role in the degradation of misfolded proteins. This chain is ATP-dependent Clp protease proteolytic subunit, found in Geobacillus sp. (strain WCH70).